Here is a 199-residue protein sequence, read N- to C-terminus: Regulator of G-protein signaling 16 (199 aa).

Residues Cys-2 and Cys-12 are each lipidated (S-palmitoyl cysteine). One can recognise an RGS domain in the interval 64 to 180 (SFQSLLNSKN…LKSPAYRDLA (117 aa)). Tyr-167 and Tyr-176 each carry phosphotyrosine.

Interacts with GNAI1 and GNAQ. Interacts with GNAI3, GNAI3 and GNAO1. Post-translationally, palmitoylated on Cys-2 and/or Cys-12. In terms of processing, phosphorylated. Phosphorylation at Tyr-167 by EGFR enhances GTPase accelerating (GAP) activity toward GNAI1. Predominantly found in the retina. Some expression has been found in the liver.

Its subcellular location is the membrane. Its function is as follows. Regulates G protein-coupled receptor signaling cascades. Inhibits signal transduction by increasing the GTPase activity of G protein alpha subunits, thereby driving them into their inactive GDP-bound form. Plays an important role in the phototransduction cascade by regulating the lifetime and effective concentration of activated transducin alpha. May regulate extra and intracellular mitogenic signals. This is Regulator of G-protein signaling 16 (Rgs16) from Rattus norvegicus (Rat).